The sequence spans 332 residues: Probable electron transfer flavoprotein subunit alpha, mitochondrial (332 aa).

Residue 275–303 (LYIAIGISGAIQHLAGMKDSKVIVAINKD) participates in FAD binding.

Belongs to the ETF alpha-subunit/FixB family. As to quaternary structure, heterodimer of an alpha and a beta subunit. It depends on FAD as a cofactor.

It localises to the mitochondrion matrix. The electron transfer flavoprotein serves as a specific electron acceptor for several dehydrogenases, including five acyl-CoA dehydrogenases, glutaryl-CoA and sarcosine dehydrogenase. It transfers the electrons to the main mitochondrial respiratory chain via ETF-ubiquinone oxidoreductase (ETF dehydrogenase). The sequence is that of Probable electron transfer flavoprotein subunit alpha, mitochondrial from Caenorhabditis elegans.